Here is a 364-residue protein sequence, read N- to C-terminus: Nucleosome assembly protein 1;2 (364 aa).

Positions 32–86 (VESIKNTLQGLAARHTDVLESLEPKVRKRVEVLREIQSQHDDLEAKFFEERAALE) form a coiled coil. Positions 53-68 (LEPKVRKRVEVLREIQ) match the Nuclear export signal motif. The Nuclear localization signal motif lies at 227-232 (KKKPKK). Disordered regions lie at residues 250–269 (FNFF…DEDT) and 301–364 (GEAA…CKQQ). 2 stretches are compositionally biased toward acidic residues: residues 259-269 (PDDDEEIDEDT) and 304-340 (AQDE…DDED). Cys-361 carries the cysteine methyl ester modification. The S-farnesyl cysteine moiety is linked to residue Cys-361. The propeptide at 362-364 (KQQ) is removed in mature form.

The protein belongs to the nucleosome assembly protein (NAP) family.

The protein resides in the nucleus. It is found in the cytoplasm. Its function is as follows. May modulate chromatin structure by regulation of nucleosome assembly/disassembly. This Oryza sativa subsp. japonica (Rice) protein is Nucleosome assembly protein 1;2 (NAP1;2).